A 611-amino-acid polypeptide reads, in one-letter code: Mitochondrial import receptor subunit TOM70 (611 aa).

Residue A2 is modified to N-acetylalanine. The Mitochondrial intermembrane segment spans residues 2–41; sequence AASKPIEAAMAAAAAPGSGNGVGGGGGTAGPGSGAGTLPR. Residues 42–62 form a helical membrane-spanning segment; sequence WHVALAIGAPLLLGAGAMYLW. Residues 63–611 are Cytoplasmic-facing; it reads SRRRRRREAG…KKYGLKPPTL (549 aa). The segment at 69–110 is disordered; that stretch reads REAGGRGDASGLKRNSERKTPEGRASPALGSGHHDGSGDSLE. R74 bears the Omega-N-methylarginine mark. A phosphoserine mark is found at S94, S99, S105, S108, and S113. TPR repeat units follow at residues 117-150 and 156-189; these read AQAA…CPTE and STFY…NPKY. An N6-acetyllysine modification is found at K188. K278 is covalently cross-linked (Glycyl lysine isopeptide (Lys-Gly) (interchain with G-Cter in SUMO2)). 8 TPR repeats span residues 297-330, 332-365, 370-403, 404-437, 445-478, 479-512, 514-547, and 548-581; these read ENSG…QGKY, AEAL…KEAN, ANAL…DPMN, SDVY…RPKF, CFAL…FPRC, AEGY…EPDN, TTYV…DNKC, and DFAY…AKSE.

The protein belongs to the Tom70 family. In terms of assembly, forms part of the preprotein translocase complex of the outer mitochondrial membrane (TOM complex) which consists of at least 7 different proteins (TOMM5, TOMM6, TOMM7, TOMM20, TOMM22, TOMM40 and TOMM70). Interacts with CAPN8. Interacts with TRADD, TRAF6 and STING. Interacts with MAVS. Interacts with HSPA8 and HSP90AA1; both interactions are required for preprotein mitochondrial import. The interaction with HSP90AA1 is direct and mediates the association of TOMM70 with IRF3 and TBK1. Upon mitochondrial depolarization, interacts with PINK1; the interaction is required for PINK1-TOM-TIM23 supercomplex formation which is critical for PINK1 stabilization at the outer mitochondrial membrane, kinase activation and downstream mitophagy. As to expression, expressed in the base region of the oxyntic and pyloric mucosae.

Its subcellular location is the mitochondrion outer membrane. In terms of biological role, acts as a receptor of the preprotein translocase complex of the outer mitochondrial membrane (TOM complex). Recognizes and mediates the translocation of mitochondrial preproteins from the cytosol into the mitochondria in a chaperone dependent manner. Mediates TBK1 and IRF3 activation induced by MAVS in response to virus infection and promotes host antiviral responses during virus infection. The protein is Mitochondrial import receptor subunit TOM70 of Mus musculus (Mouse).